The following is a 1602-amino-acid chain: Mediator of RNA polymerase II transcription subunit 26 (1602 aa).

In terms of domain architecture, TFIIS N-terminal spans 8–85 (QLTSHLSQAL…KMWREMVGIQ (78 aa)). Disordered regions lie at residues 86–108 (QTAN…PSAH), 238–298 (VTDS…AQNE), 399–481 (EDSI…KGVD), 580–617 (FSNK…SLDS), and 694–736 (SDNG…MDTP). The span at 273 to 285 (RPKKFKKDKKHKE) shows a compositional bias: basic residues. Polar residues predominate over residues 401–414 (SITNDSSTSCSRLS). A compositionally biased stretch (basic and acidic residues) spans 418–431 (VEERRKSDKIDDSI). Over residues 467 to 477 (VPKKRGRKKGS) the composition is skewed to basic residues. Residues 587–604 (AGNTDSDTITSEPSQDSN) show a composition bias toward polar residues. Over residues 715-728 (KQEEQLPKLERLSD) the composition is skewed to basic and acidic residues. Residues 792–820 (LDVASVNADTVQNQINSHNQEGETSEEQN) are a coiled coil. Disordered stretches follow at residues 1035-1158 (FEET…EVEN) and 1372-1407 (NTSA…NESD). The span at 1056-1070 (SSSSNSSCSNSSNSS) shows a compositional bias: low complexity. Residues 1073–1083 (KTQDSINEKLR) are compositionally biased toward basic and acidic residues. The segment covering 1101 to 1112 (RKRRGKNRKKRN) has biased composition (basic residues). The segment covering 1124-1143 (ISLNGTISNLSSSNNSSSSE) has biased composition (low complexity). A compositionally biased stretch (acidic residues) spans 1144 to 1158 (SETETGLENENEVEN). The segment covering 1378 to 1388 (TVSEDPLKIEE) has biased composition (basic and acidic residues).

The protein belongs to the Mediator complex subunit 26 family. In terms of assembly, component of the Mediator complex.

It is found in the nucleus. Component of the Mediator complex, a coactivator involved in the regulated transcription of nearly all RNA polymerase II-dependent genes. Mediator functions as a bridge to convey information from gene-specific regulatory proteins to the basal RNA polymerase II transcription machinery. Mediator is recruited to promoters by direct interactions with regulatory proteins and serves as a scaffold for the assembly of a functional preinitiation complex with RNA polymerase II and the general transcription factors. This chain is Mediator of RNA polymerase II transcription subunit 26 (MED26), found in Drosophila pseudoobscura pseudoobscura (Fruit fly).